The chain runs to 171 residues: MAKSNYITREGWQALDRELHYLWREERPVVTQAVSEAAAMGDRSENAEYIYGKKRLREIDRRVRFLAKRLEVLKIVDPDPRQEGKVFFGAWVRVENEQEEQRIFRLVGPDEFDPAKKWISIDSPVARALIGKQVDDEVTVQTPNGEATYWILEIRYRPFDEDRPFNEDIDN.

The stretch at 53 to 75 (KKRLREIDRRVRFLAKRLEVLKI) forms a coiled coil.

It belongs to the GreA/GreB family. GreB subfamily.

Functionally, necessary for efficient RNA polymerase transcription elongation past template-encoded arresting sites. The arresting sites in DNA have the property of trapping a certain fraction of elongating RNA polymerases that pass through, resulting in locked ternary complexes. Cleavage of the nascent transcript by cleavage factors such as GreA or GreB allows the resumption of elongation from the new 3'terminus. GreB releases sequences of up to 9 nucleotides in length. This Yersinia pestis protein is Transcription elongation factor GreB.